A 458-amino-acid polypeptide reads, in one-letter code: ATP synthase subunit beta (458 aa).

148–155 contributes to the ATP binding site; sequence GGAGVGKT.

This sequence belongs to the ATPase alpha/beta chains family. As to quaternary structure, F-type ATPases have 2 components, CF(1) - the catalytic core - and CF(0) - the membrane proton channel. CF(1) has five subunits: alpha(3), beta(3), gamma(1), delta(1), epsilon(1). CF(0) has three main subunits: a(1), b(2) and c(9-12). The alpha and beta chains form an alternating ring which encloses part of the gamma chain. CF(1) is attached to CF(0) by a central stalk formed by the gamma and epsilon chains, while a peripheral stalk is formed by the delta and b chains.

It localises to the cell inner membrane. The enzyme catalyses ATP + H2O + 4 H(+)(in) = ADP + phosphate + 5 H(+)(out). In terms of biological role, produces ATP from ADP in the presence of a proton gradient across the membrane. The catalytic sites are hosted primarily by the beta subunits. This chain is ATP synthase subunit beta, found in Legionella pneumophila (strain Paris).